A 501-amino-acid chain; its full sequence is Lysine--tRNA ligase (501 aa).

2 residues coordinate Mg(2+): glutamate 411 and glutamate 418.

The protein belongs to the class-II aminoacyl-tRNA synthetase family. In terms of assembly, homodimer. The cofactor is Mg(2+).

The protein localises to the cytoplasm. It catalyses the reaction tRNA(Lys) + L-lysine + ATP = L-lysyl-tRNA(Lys) + AMP + diphosphate. This is Lysine--tRNA ligase from Clostridium perfringens (strain ATCC 13124 / DSM 756 / JCM 1290 / NCIMB 6125 / NCTC 8237 / Type A).